A 48-amino-acid chain; its full sequence is Cuticle protein 5.1 (48 aa).

In terms of biological role, component of the cuticle of migratory locust which contains more than 100 different structural proteins. The protein is Cuticle protein 5.1 of Locusta migratoria (Migratory locust).